The sequence spans 497 residues: tRNA-2-methylthio-N(6)-dimethylallyladenosine synthase (497 aa).

Residues 1–50 (MTGTSNIPTHGKEHKDAPALLPLPAPNPHHTHAAHPGDPSHDRPPSRGKL) are disordered. Positions 48 to 165 (GKLFIKTHGC…LPDMIRARRE (118 aa)) constitute an MTTase N-terminal domain. [4Fe-4S] cluster contacts are provided by Cys57, Cys94, Cys128, Cys202, Cys206, and Cys209. Residues 188 to 430 (RAEGPSAFVS…QKHINAYAAD (243 aa)) form the Radical SAM core domain. The TRAM domain occupies 433 to 496 (KRMIGTVQTV…TNSLRGRVHT (64 aa)).

Belongs to the methylthiotransferase family. MiaB subfamily. Monomer. Requires [4Fe-4S] cluster as cofactor.

It localises to the cytoplasm. The enzyme catalyses N(6)-dimethylallyladenosine(37) in tRNA + (sulfur carrier)-SH + AH2 + 2 S-adenosyl-L-methionine = 2-methylsulfanyl-N(6)-dimethylallyladenosine(37) in tRNA + (sulfur carrier)-H + 5'-deoxyadenosine + L-methionine + A + S-adenosyl-L-homocysteine + 2 H(+). Catalyzes the methylthiolation of N6-(dimethylallyl)adenosine (i(6)A), leading to the formation of 2-methylthio-N6-(dimethylallyl)adenosine (ms(2)i(6)A) at position 37 in tRNAs that read codons beginning with uridine. This Xylella fastidiosa (strain M12) protein is tRNA-2-methylthio-N(6)-dimethylallyladenosine synthase.